A 430-amino-acid chain; its full sequence is Asparagine--tRNA ligase (430 aa).

The protein belongs to the class-II aminoacyl-tRNA synthetase family. In terms of assembly, homodimer.

The protein localises to the cytoplasm. The enzyme catalyses tRNA(Asn) + L-asparagine + ATP = L-asparaginyl-tRNA(Asn) + AMP + diphosphate + H(+). In Pelotomaculum thermopropionicum (strain DSM 13744 / JCM 10971 / SI), this protein is Asparagine--tRNA ligase.